The primary structure comprises 995 residues: DNA repair protein Rev1 (995 aa).

One can recognise a BRCT domain in the interval 35-121 (RKSDLFQGIS…KIVDYKPYLL (87 aa)). Disordered regions lie at residues 135 to 164 (GKPK…DSTK) and 182 to 211 (VATS…TTAR). Residues 136–164 (KPKDNGANESKSDVEPPKDKAEVEVDSTK) show a composition bias toward basic and acidic residues. Residues 192 to 211 (ASESKITNLSTTSNNSTTAR) show a composition bias toward low complexity. One can recognise a UmuC domain in the interval 275–505 (VMHIDMDCFF…MSLDLLPGVG (231 aa)). Position 279 (aspartate 279) interacts with Mg(2+). Residues 361–367 (SCSYEAR), asparagine 373, and aspartate 421 each bind dCTP. Aspartate 421 contacts Mg(2+). Glutamate 422 is an active-site residue. The tract at residues 696–868 (SEMRKDKPIP…HYIRSDQIVA (173 aa)) is interaction with PolI. The interval 878–995 (VNPHILKLIS…IEYIRCIKCS (118 aa)) is interaction with PolH/DNApol-eta.

Belongs to the DNA polymerase type-Y family. In terms of assembly, interacts (via C-terminus) with PolH/DNApol-eta (via C-terminal regions). Interacts (via C-terminus) with PolI. Mg(2+) is required as a cofactor.

The protein resides in the nucleus. In terms of biological role, deoxycytidyl transferase involved in DNA repair. Transfers a dCMP residue from dCTP to the 3'-end of a DNA primer in a template-dependent reaction. May assist in the first step in the bypass of abasic lesions by the insertion of a nucleotide opposite the lesion. Required for normal induction of mutations by physical and chemical agents. During homologous recombination (HR) repair of DNA double-strand breaks (DSBs) regulates the extent of repair synthesis. Possibly recruits the DNA polymerase zeta complex or another translesion polymerase to early DSB repair intermediates to initiate repair synthesis, while also blocking the access of more processive polymerases preventing them from acting during the initial stages of HR repair. The chain is DNA repair protein Rev1 from Drosophila melanogaster (Fruit fly).